Here is a 37-residue protein sequence, read N- to C-terminus: Large ribosomal subunit protein bL36c (37 aa).

This sequence belongs to the bacterial ribosomal protein bL36 family.

It localises to the plastid. It is found in the chloroplast. This Chaetosphaeridium globosum (Charophycean green alga) protein is Large ribosomal subunit protein bL36c.